A 228-amino-acid polypeptide reads, in one-letter code: SPbeta prophage-derived uncharacterized protein YomL (228 aa).

A signal peptide spans 1–28 (MRKKRVITCVMAASLTLGSLLPAGYATA).

The polypeptide is SPbeta prophage-derived uncharacterized protein YomL (yomL) (Bacillus subtilis (strain 168)).